Here is a 474-residue protein sequence, read N- to C-terminus: Glycogen synthase (474 aa).

K15 is an ADP-alpha-D-glucose binding site.

It belongs to the glycosyltransferase 1 family. Bacterial/plant glycogen synthase subfamily.

The catalysed reaction is [(1-&gt;4)-alpha-D-glucosyl](n) + ADP-alpha-D-glucose = [(1-&gt;4)-alpha-D-glucosyl](n+1) + ADP + H(+). It participates in glycan biosynthesis; glycogen biosynthesis. Synthesizes alpha-1,4-glucan chains using ADP-glucose. The chain is Glycogen synthase from Chlamydia trachomatis serovar A (strain ATCC VR-571B / DSM 19440 / HAR-13).